The primary structure comprises 249 residues: 2,3-bisphosphoglycerate-dependent phosphoglycerate mutase (249 aa).

Residues 8-15 (RHGQSAWN), 21-22 (TG), Arg60, 87-90 (ERHY), Lys98, 114-115 (RR), and 183-184 (GN) each bind substrate. His9 functions as the Tele-phosphohistidine intermediate in the catalytic mechanism. Glu87 acts as the Proton donor/acceptor in catalysis. The segment at 115–137 (RSYDTPPPPLPADDPRSPAGDAR) is disordered.

Belongs to the phosphoglycerate mutase family. BPG-dependent PGAM subfamily. In terms of assembly, homodimer.

The enzyme catalyses (2R)-2-phosphoglycerate = (2R)-3-phosphoglycerate. It functions in the pathway carbohydrate degradation; glycolysis; pyruvate from D-glyceraldehyde 3-phosphate: step 3/5. Functionally, catalyzes the interconversion of 2-phosphoglycerate and 3-phosphoglycerate. The polypeptide is 2,3-bisphosphoglycerate-dependent phosphoglycerate mutase (Nitratidesulfovibrio vulgaris (strain DSM 19637 / Miyazaki F) (Desulfovibrio vulgaris)).